We begin with the raw amino-acid sequence, 899 residues long: Bifunctional uridylyltransferase/uridylyl-removing enzyme (899 aa).

Residues 1 to 347 (MFISDPTDSL…PESERPEKSV (347 aa)) form a uridylyltransferase region. The interval 348-718 (LNARFNRVGD…EHRELALDAV (371 aa)) is uridylyl-removing. Residues 465–581 (VDAHILLLIR…TKFANLVGNV (117 aa)) form the HD domain. 2 ACT domains span residues 719–804 (QIFI…RLPR) and 827–899 (VMSL…TPSC).

Belongs to the GlnD family. Requires Mg(2+) as cofactor.

The enzyme catalyses [protein-PII]-L-tyrosine + UTP = [protein-PII]-uridylyl-L-tyrosine + diphosphate. The catalysed reaction is [protein-PII]-uridylyl-L-tyrosine + H2O = [protein-PII]-L-tyrosine + UMP + H(+). With respect to regulation, uridylyltransferase (UTase) activity is inhibited by glutamine, while glutamine activates uridylyl-removing (UR) activity. Modifies, by uridylylation and deuridylylation, the PII regulatory proteins (GlnB and homologs), in response to the nitrogen status of the cell that GlnD senses through the glutamine level. Under low glutamine levels, catalyzes the conversion of the PII proteins and UTP to PII-UMP and PPi, while under higher glutamine levels, GlnD hydrolyzes PII-UMP to PII and UMP (deuridylylation). Thus, controls uridylylation state and activity of the PII proteins, and plays an important role in the regulation of nitrogen assimilation and metabolism. This Psychrobacter sp. (strain PRwf-1) protein is Bifunctional uridylyltransferase/uridylyl-removing enzyme.